A 173-amino-acid chain; its full sequence is Zinc resistance-associated protein homolog (173 aa).

The first 28 residues, 1–28 (MNSKRIALGIIALATVVSLGTAANNAFA), serve as a signal peptide directing secretion.

Belongs to the ZraP family.

The polypeptide is Zinc resistance-associated protein homolog (Nitratidesulfovibrio vulgaris (strain ATCC 29579 / DSM 644 / CCUG 34227 / NCIMB 8303 / VKM B-1760 / Hildenborough) (Desulfovibrio vulgaris)).